The chain runs to 720 residues: MSENKCPVMHGSATTTENSMANMNWWPKSLSLDILHQHDHKTNPMAADFNYQDEVKKLDFVALKNDLHALMTDSQAWWPADWGHYGGLMIRLTWHAAGTYRIADGRGGAGHGSQRFAPLNSWPDNGNLDKARRLLWPIKKKYGNKLSWADLIAYAGTIAYESMGLKTFGFAFGREDIWHPEKDIYWGAEKDWLLPTDNDNSRYSGERNLENPLAAVMMGLIYVNPEGVDGKPDPLKTAQDIRETFARMAMNDEETVALTAGGHTVGKAHGNGNADLLGPEPEDADIHDQGFGWLNKAKRGIGRDTVTSGIEGAWTTHPTQWDNGYFTMLLNHEWELCKSPAGAWQWQPINIKEEDKPRDVEDPSISTMPMMTDADMAMKMDPEYRKISEHFHRDPEYFSKVFSRAWFKLTHRDMGPKVRYLGPDVPVEDLLWQDPVPTGPKDFNVAVVKKAIKETGLSISDMVTTAWDSARTFRGSDKRGGANGARIRLALQKQWAGNEPKRLASVLSVLEPIAASHGVSVADVIVLAGNLGIELAAKKAGFDVTVPFISGRGDATDEMTDNESFAVLEPLHDGYRNWLKQDFAVSAEELMLDRTQLMGLTAHEMTVLVGGMRVIGTNYAETGHGVFTERKGALTNDFFVNLTDMNYIWKPIGQNEYEICERETGKRKWTASRVDLIFGSNSVLRSYAEVYAQDDNKQKFVNDFISAWTKMMNADRFDVS.

Residues 1–21 (MSENKCPVMHGSATTTENSMA) form the signal peptide. A cross-link (tryptophyl-tyrosyl-methioninium (Trp-Tyr) (with M-248)) is located at residues 94–222 (WHAAGTYRIA…LAAVMMGLIY (129 aa)). His-95 (proton acceptor) is an active-site residue. Positions 222-248 (YVNPEGVDGKPDPLKTAQDIRETFARM) form a cross-link, tryptophyl-tyrosyl-methioninium (Tyr-Met) (with W-94). His-263 provides a ligand contact to heme b.

This sequence belongs to the peroxidase family. Peroxidase/catalase subfamily. As to quaternary structure, homodimer or homotetramer. Heme b serves as cofactor. In terms of processing, formation of the three residue Trp-Tyr-Met cross-link is important for the catalase, but not the peroxidase activity of the enzyme.

The enzyme catalyses H2O2 + AH2 = A + 2 H2O. It catalyses the reaction 2 H2O2 = O2 + 2 H2O. In terms of biological role, bifunctional enzyme with both catalase and broad-spectrum peroxidase activity. This chain is Catalase-peroxidase, found in Shewanella denitrificans (strain OS217 / ATCC BAA-1090 / DSM 15013).